Reading from the N-terminus, the 88-residue chain is uncharacterized protein (88 aa).

This is an uncharacterized protein from Gracula (BFDV).